Reading from the N-terminus, the 693-residue chain is DNA ligase (693 aa).

NAD(+) contacts are provided by residues 40–44 (DSEYD), 89–90 (SL), and Glu-121. Lys-123 (N6-AMP-lysine intermediate) is an active-site residue. Residues Arg-144, Glu-179, Lys-295, and Lys-319 each contribute to the NAD(+) site. Residues Cys-413, Cys-416, Cys-431, and Cys-437 each contribute to the Zn(2+) site. One can recognise a BRCT domain in the interval 610-693 (REQNILTGKI…AFIKCLEKEV (84 aa)).

The protein belongs to the NAD-dependent DNA ligase family. LigA subfamily. Mg(2+) serves as cofactor. Requires Mn(2+) as cofactor.

The enzyme catalyses NAD(+) + (deoxyribonucleotide)n-3'-hydroxyl + 5'-phospho-(deoxyribonucleotide)m = (deoxyribonucleotide)n+m + AMP + beta-nicotinamide D-nucleotide.. Functionally, DNA ligase that catalyzes the formation of phosphodiester linkages between 5'-phosphoryl and 3'-hydroxyl groups in double-stranded DNA using NAD as a coenzyme and as the energy source for the reaction. It is essential for DNA replication and repair of damaged DNA. The polypeptide is DNA ligase (Rickettsia typhi (strain ATCC VR-144 / Wilmington)).